The primary structure comprises 162 residues: FCS-Like Zinc finger 6 (162 aa).

Disordered regions lie at residues 25–47 (NLPSESEPSNQQKPTVASPYGSN) and 121–162 (RQEQ…AAAV). The span at 27-47 (PSESEPSNQQKPTVASPYGSN) shows a compositional bias: polar residues. The segment at 88 to 132 (HFLRSCALCERLLVPGRDIYMYRGDKAFCSSECRQEQMAQDERKE) adopts an FLZ-type zinc-finger fold. Positions 147 to 162 (APARAKPGKGRAAAAV) are enriched in low complexity.

The protein belongs to the FLZ family. As to quaternary structure, interacts with KIN10 and KIN11 via its FLZ-type zinc finger domain. Early expressed in hypocotyl and cotyledon. Later expressed in old or senescing leaves and in pistil, pollen and filament of open flowers.

It localises to the nucleus. Its subcellular location is the cytoplasm. It is found in the endoplasmic reticulum. In terms of biological role, may act as an adapter to facilitate the interaction of SnRK1 complex with effector proteins, conferring tissue- and stimulus-type specific differences in the SnRK1 regulation pathway. Negatively regulates KIN10 leading to a repression of the SnRK1 signaling pathway. The polypeptide is FCS-Like Zinc finger 6 (Arabidopsis thaliana (Mouse-ear cress)).